Consider the following 420-residue polypeptide: Protein BDLF2 (420 aa).

Disordered regions lie at residues 1 to 21 (MVDE…SREE) and 64 to 129 (AAAV…GGQR). Residues 1–184 (MVDEQVAVEH…AETLAEPPRC (184 aa)) lie on the Intravirion side of the membrane. A compositionally biased stretch (low complexity) spans 90–108 (TKTNTQDQNQNQTTRTRTN). Residues 185–205 (FMLSFVFIYYCCYLAFLALLA) traverse the membrane as a helical; Signal-anchor for type II membrane protein segment. Residues 206–420 (FGFNPLFLPS…LEEVMYVMVQ (215 aa)) are Virion surface-facing. Residues Asn-258, Asn-264, Asn-300, Asn-304, Asn-371, and Asn-384 are each glycosylated (N-linked (GlcNAc...) asparagine; by host).

The protein belongs to the herpesviridae BDLF2 family. As to quaternary structure, interacts with BMRF2.

The protein resides in the virion membrane. Functionally, rearranges cellular actin to increase intercellular contacts and thereby promote virus cell-to-cell spreading. Induce the outgrowth of long, branched plasma membrane fronds to create intercellular network for virion traffic. The fronds are actin based and RhoA-dependent. In Homo sapiens (Human), this protein is Protein BDLF2.